The primary structure comprises 975 residues: Ubiquitin C-terminal hydrolase 15 (975 aa).

Positions 88, 91, 99, 102, 108, 112, 121, and 125 each coordinate Zn(2+). The segment at 88–125 (CATCHGPAKTRCSRCKSVRYCSGKCQIIHWRQGHKQTC) adopts an MYND-type zinc-finger fold. The disordered stretch occupies residues 301–378 (EGPYASAAES…STKTAVSTNS (78 aa)). Residues 309–322 (ESLQRSNSSGNVTG) are compositionally biased toward polar residues. The span at 354 to 369 (YDGHEKNPHNKNEQRS) shows a compositional bias: basic and acidic residues. The 307-residue stretch at 441–747 (RGLFNCGNSC…GAYMLFYMRS (307 aa)) folds into the USP domain. The active-site Nucleophile is the Cys450. The active-site Proton acceptor is the His706. A disordered region spans residues 764–783 (PTCSKRHSSKSSKGSKQDLN).

The protein belongs to the peptidase C19 family. Highly expressed in young panicles. Expressed in roots, leaf blades, leaf sheaths and stems. Expressed at low levels in brown grains.

The protein localises to the cytoplasm. It is found in the nucleus. It carries out the reaction Thiol-dependent hydrolysis of ester, thioester, amide, peptide and isopeptide bonds formed by the C-terminal Gly of ubiquitin (a 76-residue protein attached to proteins as an intracellular targeting signal).. Functionally, recognizes and hydrolyzes the peptide bond at the C-terminal Gly of ubiquitin. Involved in the processing of poly-ubiquitin precursors as well as that of ubiquitinated proteins. Involved in the regulation of grain size. Acts as positive regulator of grain width and size by influencing cell proliferation. Functions partially antagonistically with GW2 in the regulation of grain width. Possesses deubiquitinating enzyme activity in vitro. The sequence is that of Ubiquitin C-terminal hydrolase 15 from Oryza sativa subsp. japonica (Rice).